The chain runs to 209 residues: Uracil phosphoribosyltransferase (209 aa).

5-phospho-alpha-D-ribose 1-diphosphate is bound by residues Arg79, Arg104, and 131–139 (DPMLATGGS). Uracil is bound by residues Ile194 and 199 to 201 (GDA). Asp200 is a 5-phospho-alpha-D-ribose 1-diphosphate binding site.

It belongs to the UPRTase family. Mg(2+) serves as cofactor.

It carries out the reaction UMP + diphosphate = 5-phospho-alpha-D-ribose 1-diphosphate + uracil. It participates in pyrimidine metabolism; UMP biosynthesis via salvage pathway; UMP from uracil: step 1/1. Its activity is regulated as follows. Allosterically activated by GTP. Functionally, catalyzes the conversion of uracil and 5-phospho-alpha-D-ribose 1-diphosphate (PRPP) to UMP and diphosphate. This Macrococcus caseolyticus (strain JCSC5402) (Macrococcoides caseolyticum) protein is Uracil phosphoribosyltransferase.